Here is a 242-residue protein sequence, read N- to C-terminus: Probable ergothioneine transport ATP-binding protein EgtUA (242 aa).

In terms of domain architecture, ABC transporter spans 2 to 236; it reads IEYKNVALRY…PATDFVADLF (235 aa). 34–41 is an ATP binding site; sequence GPSGSGKT.

It belongs to the ABC transporter superfamily. The complex is probably composed of at least an ATP-binding protein (EgtUA) and a transmembrane protein (EgtUBC).

It localises to the cell inner membrane. It carries out the reaction ergothioneine(out) + ATP + H2O = ergothioneine(in) + ADP + phosphate + H(+). In terms of biological role, part of an ABC transporter complex EgtU required for the uptake of ergothioneine (EGT), a natural low-molecular weight (LMW) thiol antioxidant. Probably responsible for energy coupling to the transport system. The protein is Probable ergothioneine transport ATP-binding protein EgtUA of Streptococcus pneumoniae serotype 2 (strain D39 / NCTC 7466).